The following is a 248-amino-acid chain: Uracil-DNA glycosylase (248 aa).

D85 (proton acceptor) is an active-site residue.

Belongs to the uracil-DNA glycosylase (UDG) superfamily. UNG family.

The protein resides in the cytoplasm. It catalyses the reaction Hydrolyzes single-stranded DNA or mismatched double-stranded DNA and polynucleotides, releasing free uracil.. Functionally, excises uracil residues from the DNA which can arise as a result of misincorporation of dUMP residues by DNA polymerase or due to deamination of cytosine. The chain is Uracil-DNA glycosylase from Deinococcus deserti (strain DSM 17065 / CIP 109153 / LMG 22923 / VCD115).